The sequence spans 180 residues: Probable phospholipid hydroperoxide glutathione peroxidase (180 aa).

Cysteine 54 is an active-site residue.

It belongs to the glutathione peroxidase family.

The protein localises to the cytoplasm. The enzyme catalyses a hydroperoxy polyunsaturated fatty acid + 2 glutathione = a hydroxy polyunsaturated fatty acid + glutathione disulfide + H2O. Functionally, protects cells and enzymes from oxidative damage, by catalyzing the reduction of hydrogen peroxide, lipid peroxides and organic hydroperoxide, by glutathione. The chain is Probable phospholipid hydroperoxide glutathione peroxidase (GPXHA-2) from Helianthus annuus (Common sunflower).